The chain runs to 649 residues: FAS-associated factor 1 (649 aa).

The UBA domain maps to 1-57 (MASNMDREMILADFQACTGIENIDEAITLLEQNNWDLVAAINGVIPQENGILQSDFG). Residues 55–84 (DFGGETMPGPTFDPASPPAPAPAPSSSAFR) form a disordered region. A Phosphoserine modification is found at Ser319. In terms of domain architecture, UBX spans 568-645 (NAEPVSKLRI…NLFPQETLFL (78 aa)). Position 579 is a phosphothreonine (Thr579). Ser581 is subject to Phosphoserine.

In terms of assembly, interacts with CDT1 and ATPase VCP/p97. Interacts (via UBA domain) with FAS (via death domain). Interacts (via UBA domain) with NLRP12 (via DAPIN/PYRIN domain). In terms of tissue distribution, central nervous system.

Its subcellular location is the nucleus. Its function is as follows. Ubiquitin-binding protein. Required for the progression of DNA replication forks by targeting DNA replication licensing factor CDT1 for degradation. Potentiates but cannot initiate FAS-induced apoptosis. This Rattus norvegicus (Rat) protein is FAS-associated factor 1 (Faf1).